The chain runs to 68 residues: ATP synthase protein 8 (68 aa).

Residues 8 to 24 form a helical membrane-spanning segment; that stretch reads TWLTIITPTLLALFLIT. Lys-54 bears the N6-acetyllysine; alternate mark. Lys-54 is modified (N6-succinyllysine; alternate). Lys-57 is subject to N6-acetyllysine.

This sequence belongs to the ATPase protein 8 family. In terms of assembly, F-type ATPases have 2 components, CF(1) - the catalytic core - and CF(0) - the membrane proton channel. Component of an ATP synthase complex composed of ATP5PB, ATP5MC1, ATP5F1E, ATP5PD, ATP5ME, ATP5PF, ATP5MF, MT-ATP6, MT-ATP8, ATP5F1A, ATP5F1B, ATP5F1D, ATP5F1C, ATP5PO, ATP5MG, ATP5MK and ATP5MJ. Interacts with PRICKLE3.

It localises to the mitochondrion membrane. In terms of biological role, mitochondrial membrane ATP synthase (F(1)F(0) ATP synthase or Complex V) produces ATP from ADP in the presence of a proton gradient across the membrane which is generated by electron transport complexes of the respiratory chain. F-type ATPases consist of two structural domains, F(1) - containing the extramembraneous catalytic core and F(0) - containing the membrane proton channel, linked together by a central stalk and a peripheral stalk. During catalysis, ATP synthesis in the catalytic domain of F(1) is coupled via a rotary mechanism of the central stalk subunits to proton translocation. Part of the complex F(0) domain. Minor subunit located with subunit a in the membrane. This is ATP synthase protein 8 (MT-ATP8) from Pongo pygmaeus (Bornean orangutan).